The following is a 176-amino-acid chain: ATP synthase subunit b (176 aa).

The chain crosses the membrane as a helical span at residues 18–38; sequence FGLDATVWVSIAMLVFLGILV.

This sequence belongs to the ATPase B chain family. F-type ATPases have 2 components, F(1) - the catalytic core - and F(0) - the membrane proton channel. F(1) has five subunits: alpha(3), beta(3), gamma(1), delta(1), epsilon(1). F(0) has three main subunits: a(1), b(2) and c(10-14). The alpha and beta chains form an alternating ring which encloses part of the gamma chain. F(1) is attached to F(0) by a central stalk formed by the gamma and epsilon chains, while a peripheral stalk is formed by the delta and b chains.

It localises to the cell inner membrane. Functionally, f(1)F(0) ATP synthase produces ATP from ADP in the presence of a proton or sodium gradient. F-type ATPases consist of two structural domains, F(1) containing the extramembraneous catalytic core and F(0) containing the membrane proton channel, linked together by a central stalk and a peripheral stalk. During catalysis, ATP synthesis in the catalytic domain of F(1) is coupled via a rotary mechanism of the central stalk subunits to proton translocation. Component of the F(0) channel, it forms part of the peripheral stalk, linking F(1) to F(0). This is ATP synthase subunit b from Sphingopyxis alaskensis (strain DSM 13593 / LMG 18877 / RB2256) (Sphingomonas alaskensis).